A 450-amino-acid chain; its full sequence is MSSRYRVEYHLKSHRKDEFIDWVKGLLASPFVLHAVSHEGDYNDDLATTQRVRSQYADIFKDIEGLIKDKIEFDSRNMSQDEIEDGASSQSLNILGQSRLNLLVPSIGTFFTELPLEQAFLWEDSQRAISARRMVAPSFNDIRHILNTAQIFHFKKQENLHNGKVLRLVTFDGDVTLYEDGGSLVYTNPVIPYILKLLRCGINVGIVTAAGYDEAGTYENRLKGLIVALHDSTDIPVSQKQNLTIMGGESSYLFRYYEDPEEDNFGFRQIDKEEWLLPRMKAWSLEDVEKTLDFAERTLNRLRKRLNLPSEISIIRKVRAVGIVPGERYDEASKRQVPVKLDREQLEEIVLTLQNTLESFAPSRRIQFSCFDGGSDVWCDIGGKDLGVRSLQQFYNPESPIQPSETLHVGDQFAPVGSANDFKARLAGCTLWIASPQETVNYLHRLLETD.

Residue histidine 144 participates in ATP binding. The active-site Nucleophile is aspartate 172. IMP contacts are provided by aspartate 172, aspartate 174, aspartate 180, threonine 208, aspartate 376, and lysine 384. Residues aspartate 172 and aspartate 174 each coordinate Mg(2+). Aspartate 174 serves as the catalytic Proton donor. Aspartate 411 lines the Mg(2+) pocket.

The protein belongs to the ISN1 family. In terms of assembly, homotetramer. Mg(2+) serves as cofactor.

The catalysed reaction is IMP + H2O = inosine + phosphate. Allosterically activated by ATP. ATP binding is a prerequisite to magnesium and substrate binding. ATP binds to 2 of the subunits in the homotetramer inducing a closure of these 2 subunits and the release of the C-terminal loop, thereby activating the enzyme. In terms of biological role, IMP-specific 5'-nucleotidase involved in IMP (inosine 5'-phosphate) degradation. In Saccharomyces cerevisiae (strain ATCC 204508 / S288c) (Baker's yeast), this protein is IMP-specific 5'-nucleotidase 1 (ISN1).